Here is a 380-residue protein sequence, read N- to C-terminus: Cytochrome b (380 aa).

A run of 4 helical transmembrane segments spans residues 34–54 (FGSL…LLAM), 78–99 (WLIR…FLHI), 114–134 (WNTG…GYVL), and 179–199 (FFAL…IHLT). 2 residues coordinate heme b: H84 and H98. Heme b-binding residues include H183 and H197. Residue H202 coordinates a ubiquinone. 4 helical membrane-spanning segments follow: residues 227–247 (IKDI…TLFS), 289–309 (LGGV…PFLH), 321–341 (LSQT…WIGS), and 348–368 (FIII…ILFP).

It belongs to the cytochrome b family. As to quaternary structure, the cytochrome bc1 complex contains 11 subunits: 3 respiratory subunits (MT-CYB, CYC1 and UQCRFS1), 2 core proteins (UQCRC1 and UQCRC2) and 6 low-molecular weight proteins (UQCRH/QCR6, UQCRB/QCR7, UQCRQ/QCR8, UQCR10/QCR9, UQCR11/QCR10 and a cleavage product of UQCRFS1). This cytochrome bc1 complex then forms a dimer. Heme b is required as a cofactor.

Its subcellular location is the mitochondrion inner membrane. Its function is as follows. Component of the ubiquinol-cytochrome c reductase complex (complex III or cytochrome b-c1 complex) that is part of the mitochondrial respiratory chain. The b-c1 complex mediates electron transfer from ubiquinol to cytochrome c. Contributes to the generation of a proton gradient across the mitochondrial membrane that is then used for ATP synthesis. The protein is Cytochrome b (MT-CYB) of Alectoris graeca (Rock partridge).